We begin with the raw amino-acid sequence, 1528 residues long: Cell surface antigen I/II (1528 aa).

Positions 1-50 (MLQKCKLEGIIICNEKRLLGAAKVKSGRTLSGALLGTAILASGAGQKALA) are cleaved as a signal peptide. Positions 50 to 156 (AEETSTTSTS…PEIKDDYSKQ (107 aa)) are disordered. Residues 51-68 (EETSTTSTSGGDTAVVGT) are compositionally biased toward low complexity. 2 stretches are compositionally biased toward polar residues: residues 83–97 (NPSS…QARQ) and 124–133 (TVSQDATVNK). Residues 142-154 (ANQKEPEIKDDYS) show a composition bias toward basic and acidic residues. Ag I/II A repeat units follow at residues 161–235 (QKAT…QQAN), 236–315 (SDSQ…QAGN), 316–396 (AANE…QSGN), and 397–478 (AANE…KKDL). Disordered regions lie at residues 840–951 (VPKV…VEPV) and 1459–1480 (SNTV…PKTT). Basic and acidic residues predominate over residues 855–879 (TKPDEPTYEVEKELVDLPVEPKYEP). The segment covering 1459–1468 (SNTVRTSTPE) has biased composition (polar residues). The short motif at 1503 to 1507 (LPATG) is the LPXTG sorting signal element. At Thr1506 the chain carries Pentaglycyl murein peptidoglycan amidated threonine. The propeptide at 1507–1528 (GDSSNAYLPLLGLVSLTAGFSC) is removed by sortase.

Belongs to the antigen I/II family.

It is found in the secreted. Its subcellular location is the cell wall. In Streptococcus downei (Streptococcus sobrinus), this protein is Cell surface antigen I/II.